We begin with the raw amino-acid sequence, 414 residues long: Histidinol dehydrogenase (414 aa).

Tyrosine 116, glutamine 177, and asparagine 200 together coordinate NAD(+). Substrate is bound by residues threonine 223, glutamine 245, and histidine 248. Residues glutamine 245 and histidine 248 each contribute to the Zn(2+) site. Catalysis depends on proton acceptor residues glutamate 313 and histidine 314. Substrate is bound by residues histidine 314, aspartate 347, glutamate 401, and histidine 406. Aspartate 347 lines the Zn(2+) pocket. A Zn(2+)-binding site is contributed by histidine 406.

Belongs to the histidinol dehydrogenase family. Zn(2+) is required as a cofactor.

It carries out the reaction L-histidinol + 2 NAD(+) + H2O = L-histidine + 2 NADH + 3 H(+). The protein operates within amino-acid biosynthesis; L-histidine biosynthesis; L-histidine from 5-phospho-alpha-D-ribose 1-diphosphate: step 9/9. Its function is as follows. Catalyzes the sequential NAD-dependent oxidations of L-histidinol to L-histidinaldehyde and then to L-histidine. This is Histidinol dehydrogenase from Staphylococcus epidermidis (strain ATCC 35984 / DSM 28319 / BCRC 17069 / CCUG 31568 / BM 3577 / RP62A).